The sequence spans 261 residues: Carboxy-terminal domain RNA polymerase II polypeptide A small phosphatase 1 (261 aa).

Residue M1 is modified to N-acetylmethionine. Polar residues predominate over residues 1–10 (MDSSAVITQI). The interval 1 to 33 (MDSSAVITQISKEEARGPLRGKGDQKSAASQKP) is disordered. The span at 11 to 25 (SKEEARGPLRGKGDQ) shows a compositional bias: basic and acidic residues. The FCP1 homology domain occupies 86–244 (QDSDKICVVI…HDLLPFFEQL (159 aa)). D96 (4-aspartylphosphate intermediate) is an active-site residue. Residues D96, D98, and N207 each coordinate Mg(2+). Residue D98 is the Proton donor of the active site.

In terms of assembly, monomer. Interacts with GTF2F1. Interacts with REST. Mg(2+) serves as cofactor. Expression is restricted to non-neuronal tissues. Highest expression in skeletal muscle, spleen, lung and placenta.

The protein resides in the nucleus. The catalysed reaction is O-phospho-L-seryl-[protein] + H2O = L-seryl-[protein] + phosphate. It catalyses the reaction O-phospho-L-threonyl-[protein] + H2O = L-threonyl-[protein] + phosphate. With respect to regulation, stimulated by GTF2F1. Inhibited by beryllofluoride anions. Preferentially catalyzes the dephosphorylation of 'Ser-5' within the tandem 7 residue repeats in the C-terminal domain (CTD) of the largest RNA polymerase II subunit POLR2A. Negatively regulates RNA polymerase II transcription, possibly by controlling the transition from initiation/capping to processive transcript elongation. Recruited by REST to neuronal genes that contain RE-1 elements, leading to neuronal gene silencing in non-neuronal cells. This Homo sapiens (Human) protein is Carboxy-terminal domain RNA polymerase II polypeptide A small phosphatase 1 (CTDSP1).